The sequence spans 625 residues: Glutamine--fructose-6-phosphate aminotransferase [isomerizing] (625 aa).

Cysteine 2 serves as the catalytic Nucleophile; for GATase activity. Residues 2–229 (CGIVGFVGRT…NDQIVTITAD (228 aa)) enclose the Glutamine amidotransferase type-2 domain. SIS domains lie at 296-436 (IDES…LRGN) and 470-615 (LAQD…VDQP). Residue lysine 620 is the For Fru-6P isomerization activity of the active site.

As to quaternary structure, homodimer.

The protein resides in the cytoplasm. It carries out the reaction D-fructose 6-phosphate + L-glutamine = D-glucosamine 6-phosphate + L-glutamate. In terms of biological role, catalyzes the first step in hexosamine metabolism, converting fructose-6P into glucosamine-6P using glutamine as a nitrogen source. The sequence is that of Glutamine--fructose-6-phosphate aminotransferase [isomerizing] from Corynebacterium diphtheriae (strain ATCC 700971 / NCTC 13129 / Biotype gravis).